Consider the following 289-residue polypeptide: Iodotyrosine deiodinase 1 (289 aa).

A helical membrane pass occupies residues 1–21 (MYFLTPILVAILCILVVWIFK). Basic and acidic residues predominate over residues 29–58 (KKKGEPRTRAEARPWVDEDLKDSSDLHQAE). Residues 29 to 69 (KKKGEPRTRAEARPWVDEDLKDSSDLHQAEEDADEWQESEE) form a disordered region. The segment covering 59–69 (EDADEWQESEE) has biased composition (acidic residues). FMN is bound by residues 100–104 (RRSVR), S128, and 128–129 (SG). 3-iodo-L-tyrosine is bound by residues A130, E157, Y161, and K182. FMN contacts are provided by residues 237 to 239 (TTT) and R279.

The protein belongs to the nitroreductase family. In terms of assembly, homodimer. The cofactor is FMN. As to expression, expressed at a high level in thyroid gland (at protein level). Expressed at a high level in thyroid gland and at lower level in kidney and trachea.

It localises to the cell membrane. It is found in the cytoplasmic vesicle membrane. It catalyses the reaction 2 iodide + L-tyrosine + 2 NADP(+) = 3,5-diiodo-L-tyrosine + 2 NADPH + H(+). The enzyme catalyses iodide + L-tyrosine + NADP(+) = 3-iodo-L-tyrosine + NADPH. It carries out the reaction 3-iodo-L-tyrosine + iodide + NADP(+) = 3,5-diiodo-L-tyrosine + NADPH + H(+). The catalysed reaction is L-tyrosine + chloride + NADP(+) = 3-chloro-L-tyrosine + NADPH. It catalyses the reaction bromide + L-tyrosine + NADP(+) = 3-bromo-L-tyrosine + NADPH. Catalyzes the dehalogenation of halotyrosines such as 3-bromo-L-tyrosine, 3-chloro-L-tyrosine, 3-iodo-L-tyrosine and 3,5-diiodo-L-tyrosine. During thyroid hormone biosynthesis, facilitates iodide salvage by catalysing the oxidative NADPH-dependent deiodination of the halogenated by-products of thyroid hormone production, monoiodotyrosine (L-MIT) and diiodotyrosine (L-DIT). The scavanged iodide can then reenter the hormone-producing pathways. Acts more efficiently on 3-iodo-L-tyrosine than 3,5-diiodo-L-tyrosine. The sequence is that of Iodotyrosine deiodinase 1 from Homo sapiens (Human).